We begin with the raw amino-acid sequence, 156 residues long: Putative pre-16S rRNA nuclease (156 aa).

Belongs to the YqgF nuclease family.

The protein resides in the cytoplasm. In terms of biological role, could be a nuclease involved in processing of the 5'-end of pre-16S rRNA. This is Putative pre-16S rRNA nuclease from Bartonella tribocorum (strain CIP 105476 / IBS 506).